Consider the following 657-residue polypeptide: Folic acid synthesis protein FOL1 (657 aa).

Residues 1–116 (MDKIIIKDLL…WPGVQIERTL (116 aa)) are DHNA. The interval 149–274 (YLAFGSNLGD…FVLLPLSDIA (126 aa)) is HPPK. The 309-residue stretch at 333–641 (TFIMGILNVT…DIPEIRDAML (309 aa)) folds into the Pterin-binding domain. A DHPS region spans residues 335 to 657 (IMGILNVTPD…KPQRRYQIQK (323 aa)). Asn340 serves as a coordination point for Mg(2+). (7,8-dihydropterin-6-yl)methyl diphosphate-binding residues include Thr380, Asp416, and Asn435. The segment at 466–524 (LNNSNDSNSNSSINTNGEDNNNNNNNNNNNNNNNNNNNNNNNNNDDNDNDNRSKIKQKI) is disordered. Over residues 467–509 (NNSNDSNSNSSINTNGEDNNNNNNNNNNNNNNNNNNNNNNNNN) the composition is skewed to low complexity. Positions 514–524 (NDNRSKIKQKI) are enriched in basic and acidic residues. (7,8-dihydropterin-6-yl)methyl diphosphate is bound by residues Asp547, Lys583, and 629-631 (RIH).

This sequence in the N-terminal section; belongs to the DHNA family. In the central section; belongs to the HPPK family. The protein in the C-terminal section; belongs to the DHPS family. Mg(2+) serves as cofactor.

The catalysed reaction is 7,8-dihydroneopterin = 6-hydroxymethyl-7,8-dihydropterin + glycolaldehyde. The enzyme catalyses 6-hydroxymethyl-7,8-dihydropterin + ATP = (7,8-dihydropterin-6-yl)methyl diphosphate + AMP + H(+). It catalyses the reaction (7,8-dihydropterin-6-yl)methyl diphosphate + 4-aminobenzoate = 7,8-dihydropteroate + diphosphate. It functions in the pathway cofactor biosynthesis; tetrahydrofolate biosynthesis; 2-amino-4-hydroxy-6-hydroxymethyl-7,8-dihydropteridine diphosphate from 7,8-dihydroneopterin triphosphate: step 3/4. The protein operates within cofactor biosynthesis; tetrahydrofolate biosynthesis; 2-amino-4-hydroxy-6-hydroxymethyl-7,8-dihydropteridine diphosphate from 7,8-dihydroneopterin triphosphate: step 4/4. It participates in cofactor biosynthesis; tetrahydrofolate biosynthesis; 7,8-dihydrofolate from 2-amino-4-hydroxy-6-hydroxymethyl-7,8-dihydropteridine diphosphate and 4-aminobenzoate: step 1/2. In terms of biological role, catalyzes three sequential steps of tetrahydrofolate biosynthesis. In Dictyostelium discoideum (Social amoeba), this protein is Folic acid synthesis protein FOL1 (fol1).